We begin with the raw amino-acid sequence, 317 residues long: MTCKIIGCGGYLPPKVVSNDELAKFVDTNDEWIRTRTGISQRHIAGDTEYTSHIALKAAEKAIADADISVNEIDLIITCTTTPDNSFPSVATKLQSYLGLNNVPSFDLQAVCAGFVYGVQVANSLISSGKYKTILLIGAEKMTSLLDWEDRATCVLFGDGAGSVILQRSDDNSGIIDSNIFSSGADYEILYTNGGVSMNGSSGKIIMQGQKLFRLAVEKMHQSIEELLRNNNFTVNDIDYFIPHQANVRIINKLAELLNVEDHKVVKTVEKHANCSAASIPLALSTIKASGKIKKGDIILFSAIGAGLTWGSALLRW.

Active-site residues include cysteine 112 and histidine 244. An ACP-binding region spans residues 245-249 (QANVR). The active site involves asparagine 274.

It belongs to the thiolase-like superfamily. FabH family. Homodimer.

The protein localises to the cytoplasm. It carries out the reaction malonyl-[ACP] + acetyl-CoA + H(+) = 3-oxobutanoyl-[ACP] + CO2 + CoA. It functions in the pathway lipid metabolism; fatty acid biosynthesis. Its function is as follows. Catalyzes the condensation reaction of fatty acid synthesis by the addition to an acyl acceptor of two carbons from malonyl-ACP. Catalyzes the first condensation reaction which initiates fatty acid synthesis and may therefore play a role in governing the total rate of fatty acid production. Possesses both acetoacetyl-ACP synthase and acetyl transacylase activities. Its substrate specificity determines the biosynthesis of branched-chain and/or straight-chain of fatty acids. This chain is Beta-ketoacyl-[acyl-carrier-protein] synthase III, found in Rickettsia bellii (strain OSU 85-389).